The following is a 237-amino-acid chain: MLLQPACSPSVFPRPSAAPSAMHGSQKDTTFTKIFVGGLPYHTTDASLRKYFEGFGDIEEAVVITDRQTGKSRGYGFVTMADRAAADRACKDPNPIIDGRKANVNLAYLGAKPRSLQTGFAVGVQQLHPTLIQRTYGLTPHYIYPPAIVQPSVVIPATPVPSLSSPYLEYTPASPAYAQYPPATYDQYPYAASPAAATSFVGYGYPAAVPQALSAAAPAGTTFVQYQAPQLQPDRMQ.

Positions 1–24 are disordered; that stretch reads MLLQPACSPSVFPRPSAAPSAMHG. Residues 32-109 form the RRM domain; the sequence is TKIFVGGLPY…RKANVNLAYL (78 aa).

This sequence belongs to the RBM38 family. In terms of tissue distribution, expressed in cardiac and skeletal muscle tissues.

Its subcellular location is the cytoplasm. It is found in the cytosol. The protein localises to the nucleus. RNA-binding protein that specifically bind the 3'-UTR of CDKN1A transcripts, leading to maintain the stability of CDKN1A transcripts, thereby acting as a mediator of the p53/TP53 family to regulate CDKN1A. CDKN1A is a cyclin-dependent kinase inhibitor transcriptionally regulated by the p53/TP53 family to induce cell cycle arrest. Has the ability to induce cell cycle arrest in G1 and maintain the stability of CDKN1A transcripts induced by p53/TP53. Also acts as a mRNA splicing factor. Specifically regulates the expression of FGFR2-IIIb, an epithelial cell-specific isoform of FGFR2. Plays a role in myogenic differentiation. The polypeptide is RNA-binding protein 38 (Rbm38) (Mus musculus (Mouse)).